The chain runs to 569 residues: 3-oxosteroid 1-dehydrogenase (569 aa).

An FAD-binding site is contributed by 10–39 (DVVVVGSGAAGMVAALTAAHQGLSTVVVEK). The tract at residues 127-148 (PGGKPTGRSVEPKPFDANKLGP) is disordered.

Belongs to the FAD-dependent oxidoreductase 2 family. 3-oxosteroid dehydrogenase subfamily. It depends on FAD as a cofactor.

The catalysed reaction is a 3-oxosteroid + A = a 3-oxo-Delta(1)-steroid + AH2. The enzyme catalyses a 3-oxo-Delta(4)-steroid + A = a 3-oxo-Delta(1,4)-steroid + AH2. In terms of biological role, catalyzes the elimination of the C-1 and C-2 hydrogen atoms of the A-ring from the polycyclic ring structure of 3-ketosteroids. Is also involved in the formation of 1,4-androstadiene-3,17-dione (ADD) from 4-androstene-3,17-dione (AD) to. This chain is 3-oxosteroid 1-dehydrogenase (ksdD), found in Mycolicibacterium smegmatis (strain ATCC 700084 / mc(2)155) (Mycobacterium smegmatis).